The chain runs to 145 residues: Leghemoglobin-1 (145 aa).

Positions 3-145 constitute a Globin domain; that stretch reads AFSDKQEALV…ELAAAIKKAY (143 aa). Nitrated tyrosine is present on residues Y26 and Y31. Residue S46 coordinates heme b. At S46 the chain carries Phosphoserine. An O2-binding site is contributed by H62. K65, H93, and K96 together coordinate heme b. Y134 carries the nitrated tyrosine modification.

It belongs to the plant globin family. Monomer. In terms of processing, nitrated in effective nodules and particularly in hypoxic conditions; this mechanism may play a protective role in the symbiosis by buffering toxic peroxynitrite NO(2)(-). Nitration level decrease during nodule senescence. Phosphorylation at Ser-46 disrupts the molecular environment of its porphyrin ring oxygen binding pocket, thus leading to a reduced oxygen consumption and to the delivery of oxygen O(2) to symbiosomes. In terms of tissue distribution, root nodules.

The protein localises to the cytoplasm. The protein resides in the cytosol. Its subcellular location is the nucleus. Functionally, leghemoglobin that reversibly binds oxygen O(2) through a pentacoordinated heme iron. In root nodules, facilitates the diffusion of oxygen to the bacteroids while preventing the bacterial nitrogenase from being inactivated by buffering dioxygen, nitric oxide and carbon monoxide, and promoting the formation of reactive oxygen species (ROS, e.g. H(2)O(2)). This role is essential for symbiotic nitrogen fixation (SNF). This chain is Leghemoglobin-1, found in Vigna unguiculata (Cowpea).